Here is a 658-residue protein sequence, read N- to C-terminus: Glycogen debranching enzyme (658 aa).

Asp336 acts as the Nucleophile in catalysis. Glu371 acts as the Proton donor in catalysis. Residues 459 to 486 form a disordered region; that stretch reads EANGEENRDGTNSNYSDNNGKEGLGGPL.

The protein belongs to the glycosyl hydrolase 13 family.

The catalysed reaction is Hydrolysis of (1-&gt;6)-alpha-D-glucosidic linkages to branches with degrees of polymerization of three or four glucose residues in limit dextrin.. Its pathway is glycan degradation; glycogen degradation. In terms of biological role, removes maltotriose and maltotetraose chains that are attached by 1,6-alpha-linkage to the limit dextrin main chain, generating a debranched limit dextrin. The polypeptide is Glycogen debranching enzyme (Salmonella gallinarum (strain 287/91 / NCTC 13346)).